The chain runs to 156 residues: Small ribosomal subunit protein uS7 (156 aa).

The protein belongs to the universal ribosomal protein uS7 family. As to quaternary structure, part of the 30S ribosomal subunit. Contacts proteins S9 and S11.

Its function is as follows. One of the primary rRNA binding proteins, it binds directly to 16S rRNA where it nucleates assembly of the head domain of the 30S subunit. Is located at the subunit interface close to the decoding center, probably blocks exit of the E-site tRNA. In Mycobacterium bovis (strain ATCC BAA-935 / AF2122/97), this protein is Small ribosomal subunit protein uS7.